Here is a 215-residue protein sequence, read N- to C-terminus: Sodium channel regulatory subunit beta-2 (215 aa).

The signal sequence occupies residues 1–29; sequence MHRDAWLPRPAFSLTGLSLFFSLVPSGRS. Topologically, residues 30-157 are extracellular; the sequence is MEVTVPTTLS…LEVPPERDST (128 aa). Residues 32–154 enclose the Ig-like C2-type domain; it reads VTVPTTLSVL…QVLLEVPPER (123 aa). N42, N66, and N74 each carry an N-linked (GlcNAc...) asparagine glycan. Disulfide bonds link C50–C127 and C72–C75. The helical transmembrane segment at 158-179 threads the bilayer; the sequence is VAVIVGASVGGFLAVVILVLMV. Residues 180-215 are Cytoplasmic-facing; that stretch reads VKCVRRKKEQKLSTDDLKTEEEGKTDGEGNAEDGAK. The segment at 187-215 is disordered; sequence KEQKLSTDDLKTEEEGKTDGEGNAEDGAK. Residues 189-215 are compositionally biased toward basic and acidic residues; the sequence is QKLSTDDLKTEEEGKTDGEGNAEDGAK. S192 is modified (phosphoserine). The residue at position 204 (T204) is a Phosphothreonine.

This sequence belongs to the sodium channel auxiliary subunit SCN2B (TC 8.A.17) family. In terms of assembly, a voltage-gated sodium (Nav) channel consists of an ion-conducting pore-forming alpha subunit functional on its own that is regulated by one or more beta subunits. The beta subunit SCN2B is disulfide-linked to the pore-forming alpha subunit. Interacts with SCN1A; regulatory subunit of SCN1A/Nav1.1. Interacts with SCN2A; regulatory subunit of SCN2A/Nav1.2. Interacts with SCN3A; regulatory subunit of SCN3A/Nav1.3. Interacts with SCN5A; regulatory subunit of SCN5A/Nav1.5. Interacts with SCN8A; regulatory subunit of SCN8A/Nav1.6. Interacts with SCN9A; regulatory subunit of SCN9A/Nav1.7. Interacts with SCN10A; regulatory subunit of SCN10A/Nav1.8. Interacts with TNR; may play a crucial role in clustering and regulation of activity of SCN2B-containing Nav channels at nodes of Ranvier.

The protein resides in the cell membrane. Its subcellular location is the cell projection. It is found in the axon. Regulatory subunit of multiple voltage-gated sodium (Nav) channels directly mediating the depolarization of excitable membranes. Navs, also called VGSCs (voltage-gated sodium channels) or VDSCs (voltage-dependent sodium channels), operate by switching between closed and open conformations depending on the voltage difference across the membrane. In the open conformation they allow Na(+) ions to selectively pass through the pore, along their electrochemical gradient. The influx of Na+ ions provokes membrane depolarization, initiating the propagation of electrical signals throughout cells and tissues. The accessory beta subunits participate in localization and functional modulation of the Nav channels. Modulates the activity of SCN1A/Nav1.1, SCN2A/Nav1.2, SCN2A/Nav1.3, SCN5A/Nav1.5, SCN8A/Nav1.6, SCN9A/Nav1.7 and SCN10A/Nav1.8. This Rattus norvegicus (Rat) protein is Sodium channel regulatory subunit beta-2.